Reading from the N-terminus, the 92-residue chain is Small ribosomal subunit protein uS19 (92 aa).

Belongs to the universal ribosomal protein uS19 family.

Protein S19 forms a complex with S13 that binds strongly to the 16S ribosomal RNA. This chain is Small ribosomal subunit protein uS19, found in Bartonella bacilliformis (strain ATCC 35685 / KC583 / Herrer 020/F12,63).